Reading from the N-terminus, the 234-residue chain is Phosphoribosylformylglycinamidine synthase subunit PurQ (234 aa).

Positions 4–234 constitute a Glutamine amidotransferase type-1 domain; that stretch reads RIGVVTFPGS…TSILKKLVNA (231 aa). C87 acts as the Nucleophile in catalysis. Active-site residues include H204 and E206.

As to quaternary structure, part of the FGAM synthase complex composed of 1 PurL, 1 PurQ and 2 PurS subunits.

It localises to the cytoplasm. It carries out the reaction N(2)-formyl-N(1)-(5-phospho-beta-D-ribosyl)glycinamide + L-glutamine + ATP + H2O = 2-formamido-N(1)-(5-O-phospho-beta-D-ribosyl)acetamidine + L-glutamate + ADP + phosphate + H(+). It catalyses the reaction L-glutamine + H2O = L-glutamate + NH4(+). It participates in purine metabolism; IMP biosynthesis via de novo pathway; 5-amino-1-(5-phospho-D-ribosyl)imidazole from N(2)-formyl-N(1)-(5-phospho-D-ribosyl)glycinamide: step 1/2. Its function is as follows. Part of the phosphoribosylformylglycinamidine synthase complex involved in the purines biosynthetic pathway. Catalyzes the ATP-dependent conversion of formylglycinamide ribonucleotide (FGAR) and glutamine to yield formylglycinamidine ribonucleotide (FGAM) and glutamate. The FGAM synthase complex is composed of three subunits. PurQ produces an ammonia molecule by converting glutamine to glutamate. PurL transfers the ammonia molecule to FGAR to form FGAM in an ATP-dependent manner. PurS interacts with PurQ and PurL and is thought to assist in the transfer of the ammonia molecule from PurQ to PurL. The sequence is that of Phosphoribosylformylglycinamidine synthase subunit PurQ from Streptomyces avermitilis (strain ATCC 31267 / DSM 46492 / JCM 5070 / NBRC 14893 / NCIMB 12804 / NRRL 8165 / MA-4680).